Consider the following 473-residue polypeptide: MSKVKTRFAPSPTGYLHLGNARTAIFSYLFARHNNGGFVLRIEDTDPERSKKEYEEMLIEDLKWLGIDWDEFYRQSERFDIYREYVNKLLESGHAYPCFCTPEELEKEREEARKKGIPYRYSGKCRHLTPEEVEKFKKEGKPFAIRFKVPENRTVVFEDLIKGHIAINTDDFGDFVIVRSDGSPTYNFVVVVDDALMGITHVIRGEDHIPNTPKQILIYEALGFPVPKFAHLPVILGEDRSKLSKRHGAVSVRAYREEGYMPEALFNYLCLLGWSPPEEGREIFSKEELIKIFDLKDVNDSPAVFNKEKLKWMNGVYIREVLPLDVLLERAIPFLEKAGYDTSDREYIKKVLEYTRDSFDTLSEMVDRLRPFFVDEFEIPEELWSFLDDEKAYQVLSAFLEKIREKKPETPQEVKKLAKEIQKALKVKPPQVWKPLRIALTGELEGVGIDILIAVLPKEKIEKRILRVLEKLS.

A 'HIGH' region motif is present at residues 10 to 20; it reads PSPTGYLHLGN. Zn(2+)-binding residues include C98, C100, C125, and H127. The 'KMSKS' region signature appears at 242 to 246; sequence KLSKR. K245 lines the ATP pocket.

This sequence belongs to the class-I aminoacyl-tRNA synthetase family. Glutamate--tRNA ligase type 1 subfamily. As to quaternary structure, monomer. Requires Zn(2+) as cofactor.

It is found in the cytoplasm. The enzyme catalyses tRNA(Glu) + L-glutamate + ATP = L-glutamyl-tRNA(Glu) + AMP + diphosphate. Functionally, catalyzes the attachment of glutamate to tRNA(Glu) in a two-step reaction: glutamate is first activated by ATP to form Glu-AMP and then transferred to the acceptor end of tRNA(Glu). This chain is Glutamate--tRNA ligase, found in Aquifex aeolicus (strain VF5).